We begin with the raw amino-acid sequence, 711 residues long: Nucleolin (711 aa).

The disordered stretch occupies residues 1 to 304 (MVKLAKAGKN…KKQKVEGTEP (304 aa)). Residues Lys9, Lys15, and Lys16 each carry the N6-acetyllysine modification. Positions 24–43 (VEEDSEDEEMSEDEEDDSSG) are enriched in acidic residues. Residues Ser28, Ser34, Ser41, and Ser42 each carry the phosphoserine modification. Residues 56-107 (AAATSAKKVVVSPTKKVAVATPAKKAAVTPGKKAAATPAKKTVTPAKAVATP) show a composition bias toward low complexity. The stretch at 58–65 (ATSAKKVV) is repeat 1. An 8 X 8 AA tandem repeats of X-T-P-X-K-K-X-X region spans residues 58–135 (ATSAKKVVVS…GAAIPAKGAK (78 aa)). At Ser67 the chain carries Phosphoserine. Phosphothreonine is present on residues Thr69, Thr76, Thr84, and Thr92. 3 tandem repeats follow at residues 75–82 (ATPAKKAA), 83–90 (VTPGKKAA), and 91–98 (ATPAKKTV). Lys96 carries the post-translational modification N6-acetyllysine. Position 99 is a phosphothreonine (Thr99). A 5; truncated repeat occupies 99 to 104 (TPAKAV). Lys102 is modified (N6-acetyllysine). Repeat 6 spans residues 105-112 (ATPGKKGA). Thr106 carries the post-translational modification Phosphothreonine. At Lys109 the chain carries N6-acetyllysine. Thr113 carries the post-translational modification Phosphothreonine. Lys116 is modified (N6-acetyllysine). Repeat copies occupy residues 120 to 127 (ATPGKKGA) and 128 to 135 (AIPAKGAK). Residue Thr121 is modified to Phosphothreonine. Positions 122–137 (PGKKGAAIPAKGAKNG) are enriched in low complexity. Lys124 is modified (N6-acetyllysine). Ser145, Ser153, Ser184, and Ser207 each carry phosphoserine. 2 stretches are compositionally biased toward acidic residues: residues 145–171 (SDEE…DEIE) and 184–212 (SEDE…EEAM). Thr215 bears the Phosphothreonine mark. Residues 235–273 (EDEDEEEDDEDEDDDDDEDDEDEDDDDEDEEEEEEEEEP) show a composition bias toward acidic residues. The segment covering 274–301 (VKEAPGKRKKEMAKQKAAPEAKKQKVEG) has biased composition (basic and acidic residues). Residue Lys298 forms a Glycyl lysine isopeptide (Lys-Gly) (interchain with G-Cter in SUMO1); alternate linkage. Lys298 is covalently cross-linked (Glycyl lysine isopeptide (Lys-Gly) (interchain with G-Cter in SUMO2); alternate). Thr302 carries the phosphothreonine modification. 2 consecutive RRM domains span residues 308 to 384 (FNLF…KPKG) and 394 to 467 (RTLL…YTGE). N6-acetyllysine is present on Lys319. Lys325 participates in a covalent cross-link: Glycyl lysine isopeptide (Lys-Gly) (interchain with G-Cter in SUMO1); alternate. A Glycyl lysine isopeptide (Lys-Gly) (interchain with G-Cter in SUMO2); alternate cross-link involves residue Lys325. Residue Lys349 is modified to N6-acetyllysine. Ser357 bears the Phosphoserine mark. Thr368 is subject to Phosphothreonine. Lys371 participates in a covalent cross-link: Glycyl lysine isopeptide (Lys-Gly) (interchain with G-Cter in SUMO2). Lys378 participates in a covalent cross-link: Glycyl lysine isopeptide (Lys-Gly) (interchain with G-Cter in SUMO2); alternate. At Lys378 the chain carries N6-acetyllysine; alternate. An N6-acetyllysine mark is found at Lys399 and Lys404. Thr406 is modified (phosphothreonine). N6-acetyllysine occurs at positions 428 and 445. 2 positions are modified to phosphoserine: Ser459 and Ser461. Lys468 and Lys478 each carry N6-acetyllysine. The region spanning 487 to 561 (KTLVLSNLSY…RAIRLELQGP (75 aa)) is the RRM 3 domain. Lys514 is covalently cross-linked (Glycyl lysine isopeptide (Lys-Gly) (interchain with G-Cter in SUMO2); alternate). Lys514 is subject to N6-acetyllysine; alternate. An N6-acetyllysine modification is found at Lys522. Position 564 is a phosphoserine (Ser564). At Lys573 the chain carries N6-acetyllysine. The RRM 4 domain maps to 573–648 (KTLFVKGLSE…NKVTLDWAKP (76 aa)). Residue Lys578 forms a Glycyl lysine isopeptide (Lys-Gly) (interchain with G-Cter in SUMO2); alternate linkage. Lys578 bears the N6-acetyllysine; alternate mark. A Phosphoserine modification is found at Ser581. A Glycyl lysine isopeptide (Lys-Gly) (interchain with G-Cter in SUMO1); alternate cross-link involves residue Lys590. Residue Lys590 forms a Glycyl lysine isopeptide (Lys-Gly) (interchain with G-Cter in SUMO2); alternate linkage. Ser592 and Ser620 each carry phosphoserine. A Glycyl lysine isopeptide (Lys-Gly) (interchain with G-Cter in SUMO2) cross-link involves residue Lys625. Residues 641–711 (VTLDWAKPKG…KPQGKKTKFE (71 aa)) are disordered. Lys647 bears the N6-acetyllysine mark. Positions 651 to 697 (EGGFGGRGGGRGGFGGRGGGRGGRGGFGGRGRGGFGGRGGFRGGRGG) are enriched in gly residues. Asymmetric dimethylarginine is present on residues Arg657, Arg661, Arg667, Arg671, Arg674, Arg680, Arg682, Arg688, and Arg692. Position 695 is an asymmetric dimethylarginine; alternate (Arg695). Position 695 is an omega-N-methylarginine; alternate (Arg695). The span at 698–711 (GGDHKPQGKKTKFE) shows a compositional bias: basic and acidic residues.

In terms of assembly, identified in a IGF2BP1-dependent mRNP granule complex containing untranslated mRNAs. Component of the SWAP complex that consists of NPM1, NCL/nucleolin, PARP1 and SWAP70. Component of a complex which is at least composed of HTATSF1/Tat-SF1, the P-TEFb complex components CDK9 and CCNT1, RNA polymerase II, SUPT5H, and NCL/nucleolin. Interacts with AICDA. Interacts with APTX. Interacts with C1QBP. Interacts with ERBB4. Interacts (via C-terminus) with FMR1 isoform 6 (via N-terminus). Interacts with GZF1; this interaction is important for nucleolar localization of GZF1. Interacts with NSUN2. Interacts with NVL. Interacts (via N-terminus domain) with SETX. Interacts (via RRM1 and C-terminal RRM4/Arg/Gly-rich domains) with TERT; the interaction is important for nucleolar localization of TERT. Interacts with WDR46. Interacts with ZFP36. Interacts with LRRC34. Interacts with RRP1B. Interacts with HNRNPU; this interaction occurs during mitosis. Interacts with RIOK1; RIOK1 recruits NCL to PRMT5 for symmetrically methylation. Interacts with ZBTB7B. Interacts with MDK; this interaction promotes NCL clustering and lateral movements of this complex into lipid rafts leading to MDK internalization. Interacts with HDGF. Interacts with ALKBH2. Interacts with IGFBP5; this interaction is necessary for IGFBP5 localization to the nucleus. In terms of processing, some glutamate residues are glycylated by TTLL8. This modification occurs exclusively on glutamate residues and results in a glycine chain on the gamma-carboxyl group. Symmetrically methylated by PRMT5.

The protein resides in the nucleus. The protein localises to the nucleolus. It localises to the cytoplasm. Its function is as follows. Nucleolin is the major nucleolar protein of growing eukaryotic cells. It is found associated with intranucleolar chromatin and pre-ribosomal particles. It induces chromatin decondensation by binding to histone H1. It is thought to play a role in pre-rRNA transcription and ribosome assembly. May play a role in the process of transcriptional elongation. Binds RNA oligonucleotides with 5'-UUAGGG-3' repeats more tightly than the telomeric single-stranded DNA 5'-TTAGGG-3' repeats. The sequence is that of Nucleolin (NCL) from Macaca fascicularis (Crab-eating macaque).